A 315-amino-acid polypeptide reads, in one-letter code: Malate dehydrogenase (315 aa).

Residues 10 to 15 (GAGNVG) and Asp-34 each bind NAD(+). Positions 85 and 91 each coordinate substrate. NAD(+)-binding positions include Asn-98 and 121–123 (VSN). Residues Asn-123 and Arg-154 each contribute to the substrate site. The Proton acceptor role is filled by His-178.

Belongs to the LDH/MDH superfamily. MDH type 3 family.

The enzyme catalyses (S)-malate + NAD(+) = oxaloacetate + NADH + H(+). Its function is as follows. Catalyzes the reversible oxidation of malate to oxaloacetate. The polypeptide is Malate dehydrogenase (Rhodopirellula baltica (strain DSM 10527 / NCIMB 13988 / SH1)).